A 173-amino-acid chain; its full sequence is MLGVSGMQPRQLAAQILNFALVLSTAFMMWKGLSVVSDSSSPIVVVLSGSMEPAFQRGDLLFLWNRGLDTQVGEIVVYNVKGKDIPIVHRVVRRYGGGKTPLRLLTKGDNNIADDTELYATSQSFLTRKEDVVGSVVGFIPFVGYVTILLSENPWMKQVMLGLMGVMVVLQRE.

The Cytoplasmic portion of the chain corresponds to 1–15 (MLGVSGMQPRQLAAQ). The helical; Signal-anchor for type II membrane protein transmembrane segment at 16–36 (ILNFALVLSTAFMMWKGLSVV) threads the bilayer. The Lumenal portion of the chain corresponds to 37–173 (SDSSSPIVVV…MGVMVVLQRE (137 aa)). Catalysis depends on charge relay system residues serine 50, histidine 89, and aspartate 115. A C-terminal short (CTS) helix region spans residues 159-170 (VMLGLMGVMVVL).

This sequence belongs to the peptidase S26B family. In terms of assembly, component of the signal peptidase complex (SPC) composed of a catalytic subunit SEC11 and three accessory subunits SPC1, SPC2 and SPC3. The complex induces a local thinning of the ER membrane which is used to measure the length of the signal peptide (SP) h-region of protein substrates. This ensures the selectivity of the complex towards h-regions shorter than 18-20 amino acids. SPC associates with the translocon complex.

It localises to the endoplasmic reticulum membrane. The catalysed reaction is Cleavage of hydrophobic, N-terminal signal or leader sequences from secreted and periplasmic proteins.. In terms of biological role, catalytic component of the signal peptidase complex (SPC) which catalyzes the cleavage of N-terminal signal sequences from nascent proteins as they are translocated into the lumen of the endoplasmic reticulum. Specifically cleaves N-terminal signal peptides that contain a hydrophobic alpha-helix (h-region) shorter than 18-20 amino acids. The chain is Signal peptidase complex catalytic subunit SEC11 (SEC11) from Leptosphaeria maculans (strain JN3 / isolate v23.1.3 / race Av1-4-5-6-7-8) (Blackleg fungus).